A 216-amino-acid polypeptide reads, in one-letter code: Hydrogenase-4 component E (216 aa).

Residues 1–3 (MTG) lie on the Periplasmic side of the membrane. Residues 4 to 24 (SMIVNNLAGLMMLTSLFVISV) form a helical membrane-spanning segment. Over 25–38 (KSYRLSCGFYACQS) the chain is Cytoplasmic. 2 consecutive transmembrane segments (helical) span residues 39–59 (LVLVSIFATLSCLFAAEQLLI) and 60–80 (WSASAFITKVLLVPLIMTYAA). The Cytoplasmic portion of the chain corresponds to 81–92 (RNIPQNIPEKAL). Residues 93–113 (FGPAMMALLAALIVLLCAFVV) traverse the membrane as a helical segment. Residues 114 to 122 (QPVKLPMAT) lie on the Periplasmic side of the membrane. Residues 123 to 143 (GLKPALAVALGHFLLGLLCIV) form a helical membrane-spanning segment. The Cytoplasmic segment spans residues 144-150 (SQRNILR). A helical membrane pass occupies residues 151–171 (QIFGYCLMENGSHLVLALLAW). Residues 172–175 (RAPE) are Periplasmic-facing. Residues 176 to 196 (LVEIGIATDAIFAVIVMVLLA) traverse the membrane as a helical segment. Over 197 to 216 (RKIWRTHGTLDVNNLTALKG) the chain is Cytoplasmic.

It is found in the cell inner membrane. The protein is Hydrogenase-4 component E (hyfE) of Escherichia coli O157:H7.